A 560-amino-acid chain; its full sequence is Digoxin reductase (560 aa).

The tat-type signal signal peptide spans 1–48; the sequence is MEYGKCRGIERGMGRRDFLKAATLLGATAAGAGMLAGCAPKSASEAQA.

The protein belongs to the FAD-dependent oxidoreductase 2 family. In terms of assembly, may form a membrane-associated complex with Cgr1. FAD serves as cofactor. Requires [4Fe-4S] cluster as cofactor. In terms of processing, predicted to be exported by the Tat system. The position of the signal peptide cleavage has not been experimentally proven.

Its subcellular location is the cell membrane. The catalysed reaction is digoxin + 2 Fe(II)-[cytochrome c] + 3 H(+) = dihydrodigoxin + 2 Fe(III)-[cytochrome c]. It carries out the reaction digitoxin + 2 Fe(II)-[cytochrome c] + 3 H(+) = dihydrodigitoxin + 2 Fe(III)-[cytochrome c]. The enzyme catalyses digoxigenin + 2 Fe(II)-[cytochrome c] + 3 H(+) = dihydrodigoxigenin + 2 Fe(III)-[cytochrome c]. It catalyses the reaction ouabain + 2 Fe(II)-[cytochrome c] + 3 H(+) = dihydroouabain + 2 Fe(III)-[cytochrome c]. The catalysed reaction is ouabagenin + 2 Fe(II)-[cytochrome c] + 3 H(+) = dihydroouabagenin + 2 Fe(III)-[cytochrome c]. Involved in the inactivation of the cardiac medication and plant natural product digoxin, thus decreasing drug efficacy and toxicity. Catalyzes the reduction of the alpha,beta-unsaturated butyrolactone ring of digoxin to the inactive metabolite dihydrodigoxin. Likely uses the cytochrome Cgr1 as the physiological electron donor, encoded by the adjacent gene in the locus. Only reduces digoxin and other cardenolide toxins, such as digitoxin, digoxigenin, ouabain and ouabagenin. Therefore is a specialized enzyme present in some gut bacteria E.lenta that protects their human host against ingested plant toxins. In Eggerthella lenta (strain ATCC 25559 / DSM 2243 / CCUG 17323 / JCM 9979 / KCTC 3265 / NCTC 11813 / VPI 0255 / 1899 B) (Eubacterium lentum), this protein is Digoxin reductase.